A 595-amino-acid polypeptide reads, in one-letter code: Solute carrier family 13 member 1 (595 aa).

The next 5 membrane-spanning stretches (helical) occupy residues 13 to 33 (FLLV…IRSK), 40 to 60 (ILFV…ITAL), 77 to 97 (VASA…CLAT), 113 to 133 (VMMV…STAF), and 134 to 154 (LSMW…VEAV). An N-linked (GlcNAc...) asparagine glycan is attached at Asn174. Residues 190–218 (QETNERKEKTKPALGSSNDKGKVSSKMET) form a disordered region. Residues 208–218 (DKGKVSSKMET) are compositionally biased toward basic and acidic residues. The next 8 membrane-spanning stretches (helical) occupy residues 239 to 259 (LMCL…ITGT), 283 to 303 (SWFL…WIWL), 348 to 368 (IVTL…DPGF), 381 to 401 (GYVT…LIPA), 464 to 484 (PLGS…VTSL), 491 to 511 (PATI…IHVN), 512 to 532 (PLHI…LPVA), and 553 to 573 (AGLG…FTWI). The N-linked (GlcNAc...) asparagine glycan is linked to Asn591.

This sequence belongs to the SLC13A/DASS transporter (TC 2.A.47) family. NADC subfamily. In terms of tissue distribution, kidney and intestine.

It localises to the apical cell membrane. It catalyses the reaction sulfate(out) + 3 Na(+)(out) = sulfate(in) + 3 Na(+)(in). The enzyme catalyses selenate(out) + 3 Na(+)(out) = selenate(in) + 3 Na(+)(in). It carries out the reaction thiosulfate(out) + 3 Na(+)(out) = thiosulfate(in) + 3 Na(+)(in). In terms of biological role, sodium:sulfate symporter that mediates sulfate reabsorption in the kidney and small intestine. Can also mediate the transport of selenate and thiosulfate. The protein is Solute carrier family 13 member 1 (Slc13a1) of Rattus norvegicus (Rat).